Here is a 287-residue protein sequence, read N- to C-terminus: ATP synthase gamma chain (287 aa).

Belongs to the ATPase gamma chain family. As to quaternary structure, F-type ATPases have 2 components, CF(1) - the catalytic core - and CF(0) - the membrane proton channel. CF(1) has five subunits: alpha(3), beta(3), gamma(1), delta(1), epsilon(1). CF(0) has three main subunits: a, b and c.

The protein resides in the cell inner membrane. In terms of biological role, produces ATP from ADP in the presence of a proton gradient across the membrane. The gamma chain is believed to be important in regulating ATPase activity and the flow of protons through the CF(0) complex. The chain is ATP synthase gamma chain from Salmonella gallinarum (strain 287/91 / NCTC 13346).